A 770-amino-acid polypeptide reads, in one-letter code: Low-density lipoprotein receptor-related protein 3 (770 aa).

The signal sequence occupies residues 1 to 36 (MEKRAAAGPEGAPGARAPLAVVCLVNLFLTGRLSSA). Residues 37–496 (VPALAACSGK…HGCLAAVPRK (460 aa)) are Extracellular-facing. 9 disulfide bridges follow: cysteine 43/cysteine 72, cysteine 99/cysteine 120, cysteine 166/cysteine 178, cysteine 173/cysteine 191, cysteine 185/cysteine 200, cysteine 212/cysteine 227, cysteine 219/cysteine 240, cysteine 234/cysteine 249, and cysteine 254/cysteine 282. The region spanning 43 to 159 (CSGKLEQHTE…QGFRLSYIRG (117 aa)) is the CUB 1 domain. A glycan (N-linked (GlcNAc...) asparagine) is linked at asparagine 71. 2 consecutive LDL-receptor class A domains span residues 165-201 (SCQTDEFRCDNGKCLPGPWQCNMVDECGDGSDEGNCS) and 211-250 (LCPGGTFPCSGARSTRCLPVERRCDGTQDCGDGSDEAGCP). A glycan (N-linked (GlcNAc...) asparagine) is linked at asparagine 199. Residues 254 to 365 (CGRRLGSFYG…HGFNATYQVK (112 aa)) form the CUB 2 domain. A glycan (N-linked (GlcNAc...) asparagine) is linked at asparagine 359. LDL-receptor class A domains follow at residues 415-453 (ACPPDQYPCEGGSGLCYAPADRCNNQKSCPDGADEKNCF) and 454-490 (SCQPGTFHCGTNLCIFETWRCDGQEDCQDGSDEHGCL). Cystine bridges form between cysteine 416/cysteine 430, cysteine 423/cysteine 443, cysteine 437/cysteine 452, cysteine 455/cysteine 467, cysteine 462/cysteine 480, and cysteine 474/cysteine 489. A helical membrane pass occupies residues 497–517 (VITAALIGSLVCGLLLVIALG). Residues 518 to 770 (CAFKLYSLRT…ASDDEALLVC (253 aa)) are Cytoplasmic-facing. A disordered region spans residues 639-753 (LLQAAPGPVP…PLGVCRSPPP (115 aa)). The span at 689 to 703 (RDPEYRPEDKERKAC) shows a compositional bias: basic and acidic residues.

This sequence belongs to the LDLR family. Binds GGA1 and GGA2.

Its subcellular location is the membrane. It is found in the coated pit. Functionally, probable receptor, which may be involved in the internalization of lipophilic molecules and/or signal transduction. Its precise role is however unclear, since it does not bind to very low density lipoprotein (VLDL) or to LRPAP1 in vitro. In Rattus norvegicus (Rat), this protein is Low-density lipoprotein receptor-related protein 3 (Lrp3).